The chain runs to 368 residues: Alanine racemase (368 aa).

Catalysis depends on Lys-40, which acts as the Proton acceptor; specific for D-alanine. Lys-40 is modified (N6-(pyridoxal phosphate)lysine). Arg-134 is a binding site for substrate. Tyr-263 (proton acceptor; specific for L-alanine) is an active-site residue. Met-310 contacts substrate.

This sequence belongs to the alanine racemase family. The cofactor is pyridoxal 5'-phosphate.

It catalyses the reaction L-alanine = D-alanine. It participates in amino-acid biosynthesis; D-alanine biosynthesis; D-alanine from L-alanine: step 1/1. Catalyzes the interconversion of L-alanine and D-alanine. May also act on other amino acids. The polypeptide is Alanine racemase (alr) (Listeria monocytogenes serovar 1/2a (strain ATCC BAA-679 / EGD-e)).